The following is an 831-amino-acid chain: Zinc transporter ZIP10 (831 aa).

The signal sequence occupies residues 1–25; that stretch reads MKVHMHTKFCLICLLTFIFHHCNHC. Residues 126–318 are disordered; the sequence is HNHQHSHNHL…RKREAPHVKN (193 aa). The segment covering 138-147 has biased composition (polar residues); that stretch reads ENQTVTSVST. An N-linked (GlcNAc...) asparagine glycan is attached at Asn139. A compositionally biased stretch (basic and acidic residues) spans 152–171; the sequence is KCDPEKETVEVSVKSDDKHM. Over residues 172–188 the composition is skewed to basic residues; that stretch reads HDHNHRLRHHHRLHHHL. Basic and acidic residues predominate over residues 189 to 198; the sequence is DHNNTHHFHN. 2 N-linked (GlcNAc...) asparagine glycosylation sites follow: Asn198 and Asn218. Over residues 211-221 the composition is skewed to polar residues; the sequence is NEPSTETNKTQ. Residues 229 to 238 show a composition bias toward basic residues; sequence PKGKRKKKGR. Composition is skewed to basic and acidic residues over residues 256–273 and 281–315; these read DQGE…DRVH and HLPE…EAPH. The N-linked (GlcNAc...) asparagine glycan is linked to Asn339. Transmembrane regions (helical) follow at residues 411–431 and 438–458; these read IISI…VPII and FLLT…ALLH. The tract at residues 464–484 is disordered; it reads QGGHDHSHQHAHGHGHSHGHE. The helical transmembrane segment at 495 to 515 threads the bilayer; that stretch reads VLKGLVALGGIYLLFIIEHCI. Phosphothreonine is present on residues Thr536 and Thr553. Residue Ser591 is modified to Phosphoserine. The next 4 helical transmembrane spans lie at 687–707, 732–752, 759–779, and 801–821; these read AIGA…IAVF, IVYN…GTAV, ITLW…LVDM, and FILQ…IALY.

It belongs to the ZIP transporter (TC 2.A.5) family. Interacts with SLC39A6; which triggers cells to undergo EMT and mitosis. Found in a complex with SLC39A6, SLC39A10 and with the 'Ser-727' phosphorylated form of STAT3 throughout mitosis. Found in a complex with SLC39A6, SLC39A10 and with NCAM1; this complex controls NCAM1 phosphorylation and integration into focal adhesion complexes during epithelial-tomesenchymal transition. Found in a complex with SLC39A6, SLC39A10 and with GSK3B that controls NCAM1 phosphorylation. In terms of processing, undergoes N-terminal ectodomain shedding.

Its subcellular location is the cell membrane. It is found in the apical cell membrane. It carries out the reaction Zn(2+)(in) = Zn(2+)(out). Its function is as follows. Zinc-influx transporter. When associated with SLC39A6, the heterodimer formed by SLC39A10 and SLC39A6 mediates cellular zinc uptake to trigger cells to undergo epithelial-to-mesenchymal transition (EMT). SLC39A10-SLC39A6 heterodimers play also an essentiel role in initiating mitosis by importing zinc into cells to initiate a pathway resulting in the onset of mitosis. Plays an important for both mature B-cell maintenance and humoral immune responses. When associated with SLC39A10, the heterodimer controls NCAM1 phosphorylation and integration into focal adhesion complexes during EMT. This Homo sapiens (Human) protein is Zinc transporter ZIP10.